The following is a 447-amino-acid chain: Phosphoglucosamine mutase (447 aa).

Ser-100 functions as the Phosphoserine intermediate in the catalytic mechanism. Mg(2+)-binding residues include Ser-100, Asp-239, Asp-241, and Asp-243. A Phosphoserine modification is found at Ser-100.

Belongs to the phosphohexose mutase family. Mg(2+) is required as a cofactor. Activated by phosphorylation.

The catalysed reaction is alpha-D-glucosamine 1-phosphate = D-glucosamine 6-phosphate. Its function is as follows. Catalyzes the conversion of glucosamine-6-phosphate to glucosamine-1-phosphate. This chain is Phosphoglucosamine mutase, found in Dictyoglomus turgidum (strain DSM 6724 / Z-1310).